A 216-amino-acid polypeptide reads, in one-letter code: 3-isopropylmalate dehydratase small subunit (216 aa).

This sequence belongs to the LeuD family. LeuD type 1 subfamily. As to quaternary structure, heterodimer of LeuC and LeuD.

It catalyses the reaction (2R,3S)-3-isopropylmalate = (2S)-2-isopropylmalate. It functions in the pathway amino-acid biosynthesis; L-leucine biosynthesis; L-leucine from 3-methyl-2-oxobutanoate: step 2/4. Functionally, catalyzes the isomerization between 2-isopropylmalate and 3-isopropylmalate, via the formation of 2-isopropylmaleate. In Acidovorax ebreus (strain TPSY) (Diaphorobacter sp. (strain TPSY)), this protein is 3-isopropylmalate dehydratase small subunit.